A 356-amino-acid polypeptide reads, in one-letter code: UDP-N-acetylglucosamine--N-acetylmuramyl-(pentapeptide) pyrophosphoryl-undecaprenol N-acetylglucosamine transferase (356 aa).

Residues 12–14 (SGG), Asn-120, Arg-163, Ser-187, and Gln-286 contribute to the UDP-N-acetyl-alpha-D-glucosamine site.

This sequence belongs to the glycosyltransferase 28 family. MurG subfamily.

The protein resides in the cell inner membrane. It carries out the reaction di-trans,octa-cis-undecaprenyl diphospho-N-acetyl-alpha-D-muramoyl-L-alanyl-D-glutamyl-meso-2,6-diaminopimeloyl-D-alanyl-D-alanine + UDP-N-acetyl-alpha-D-glucosamine = di-trans,octa-cis-undecaprenyl diphospho-[N-acetyl-alpha-D-glucosaminyl-(1-&gt;4)]-N-acetyl-alpha-D-muramoyl-L-alanyl-D-glutamyl-meso-2,6-diaminopimeloyl-D-alanyl-D-alanine + UDP + H(+). It participates in cell wall biogenesis; peptidoglycan biosynthesis. In terms of biological role, cell wall formation. Catalyzes the transfer of a GlcNAc subunit on undecaprenyl-pyrophosphoryl-MurNAc-pentapeptide (lipid intermediate I) to form undecaprenyl-pyrophosphoryl-MurNAc-(pentapeptide)GlcNAc (lipid intermediate II). The chain is UDP-N-acetylglucosamine--N-acetylmuramyl-(pentapeptide) pyrophosphoryl-undecaprenol N-acetylglucosamine transferase from Pelagibacter ubique (strain HTCC1062).